A 637-amino-acid polypeptide reads, in one-letter code: Sterol 3-beta-glucosyltransferase UGT80A2 (637 aa).

2 disordered regions span residues Met1–Val29 and Val66–Gln112. Residues Ser13 to Ser24 are compositionally biased toward low complexity. The span at Ala67–Arg79 shows a compositional bias: polar residues. The span at Arg103 to Gln112 shows a compositional bias: basic and acidic residues.

The protein belongs to the glycosyltransferase 28 family. As to expression, expressed in roots, cauline leaf epidermal cells, stomata, stamen, pollen and around the base of siliques.

The enzyme catalyses a sterol + UDP-alpha-D-glucose = a sterol 3-beta-D-glucoside + UDP + H(+). Functionally, involved in the biosynthesis of sterol glucosides. Catalyzes the synthesis of steryl glycosides (SGs) and acyl steryl glycosides (ASGs) which are the most abundant sterol derivatives in higher plants. Can act on several sterols like sitosterol, campesterol and stigmasterol. Both UGT80A2 and UGT80B1 are required for the normal production of SGs and ASGs in seeds. This is Sterol 3-beta-glucosyltransferase UGT80A2 (UGT80A2) from Arabidopsis thaliana (Mouse-ear cress).